A 434-amino-acid polypeptide reads, in one-letter code: Putative D-alanyl-D-alanine carboxypeptidase (434 aa).

A helical; Signal-anchor transmembrane segment spans residues 7–25; the sequence is YLSLLAVSCSVSAAKYPVL.

It belongs to the peptidase S12 family. YfeW subfamily.

Its subcellular location is the cell inner membrane. The catalysed reaction is Preferential cleavage: (Ac)2-L-Lys-D-Ala-|-D-Ala. Also transpeptidation of peptidyl-alanyl moieties that are N-acyl substituents of D-alanine.. The protein is Putative D-alanyl-D-alanine carboxypeptidase of Escherichia coli O157:H7.